Here is a 628-residue protein sequence, read N- to C-terminus: Patulin synthase (628 aa).

The signal sequence occupies residues 1-20 (MRPIPSILGALGAFATLSAA). Asn-48 is a glycosylation site (N-linked (GlcNAc...) asparagine). FAD is bound by residues 60 to 61 (TA) and 81 to 82 (EA). The N-linked (GlcNAc...) asparagine glycan is linked to Asn-92. Position 147-150 (147-150 (NYMA)) interacts with FAD. N-linked (GlcNAc...) asparagine glycans are attached at residues Asn-197, Asn-260, Asn-386, Asn-429, and Asn-486. His-564 serves as the catalytic Proton acceptor. FAD contacts are provided by residues Ala-598 and 609–610 (PQ).

This sequence belongs to the GMC oxidoreductase family. Homodimer. Requires FAD as cofactor.

The protein resides in the cytoplasm. Its subcellular location is the cell cortex. It localises to the vacuole. The protein localises to the secreted. It is found in the cell wall. The enzyme catalyses (E)-ascladiol + A = patulin + AH2. It functions in the pathway mycotoxin biosynthesis; patulin biosynthesis. Its function is as follows. Patulin synthase; part of the gene cluster that mediates the biosynthesis of patulin, an acetate-derived tetraketide mycotoxin produced by several fungal species that shows antimicrobial properties against several bacteria. PatE catalyzes the last step of the pathway which is the conversion of E-ascladiol to patulin. The pathway begins with the synthesis of 6-methylsalicylic acid by the polyketide synthase (PKS) patK via condensation of acetate and malonate units. The 6-methylsalicylic acid decarboxylase patG then catalyzes the decarboxylation of 6-methylsalicylic acid to yield m-cresol (also known as 3-methylphenol). These first reactions occur in the cytosol. The intermediate m-cresol is then transported into the endoplasmic reticulum where the cytochrome P450 monooxygenase patH converts it to m-hydroxybenzyl alcohol, which is further converted to gentisyl alcohol by the cytochrome P450 monooxygenase patI. The oxidoreductases patJ and patO further convert gentisyl alcohol to isoepoxydon in the vacuole. PatN catalyzes then the transformation of isoepoxydon into phyllostine. The cluster protein patF is responsible for the conversion from phyllostine to neopatulin whereas the alcohol dehydrogenase patD converts neopatulin to E-ascladiol. The steps between isoepoxydon and E-ascladiol occur in the cytosol, and E-ascladiol is probably secreted to the extracellular space by one of the cluster-specific transporters patC or patM. Finally, the secreted patulin synthase patE catalyzes the conversion of E-ascladiol to patulin. The sequence is that of Patulin synthase from Aspergillus clavatus (strain ATCC 1007 / CBS 513.65 / DSM 816 / NCTC 3887 / NRRL 1 / QM 1276 / 107).